We begin with the raw amino-acid sequence, 523 residues long: Peptidyl-prolyl cis-trans isomerase 4 (523 aa).

The U-box domain maps to 38-111; sequence KRLPINHCSL…GKFRCPVTFR (74 aa). Residues 278 to 433 enclose the PPIase cyclophilin-type domain; sequence KNAFVRLVTN…VSVVIMRAEV (156 aa).

It belongs to the cyclophilin-type PPIase family. PPIL2 subfamily. As to quaternary structure, interacts with mep-1. In terms of tissue distribution, exclusively in the larval body wall striated muscle cells.

Its subcellular location is the nucleus. The catalysed reaction is [protein]-peptidylproline (omega=180) = [protein]-peptidylproline (omega=0). The enzyme catalyses S-ubiquitinyl-[E2 ubiquitin-conjugating enzyme]-L-cysteine + [acceptor protein]-L-lysine = [E2 ubiquitin-conjugating enzyme]-L-cysteine + N(6)-ubiquitinyl-[acceptor protein]-L-lysine.. Its pathway is protein modification; protein ubiquitination. May catalyze the cis-trans isomerization of proline imidic peptide bonds in oligopeptides thereby assisting the folding of proteins. May also function as a chaperone, playing a role in intracellular transport of proteins. May also have a protein ubiquitin ligase activity acting as an E3 ubiquitin protein ligase or as a ubiquitin-ubiquitin ligase promoting elongation of ubiquitin chains on proteins. Influences the hermaphrodite switch from spermatogenesis to oogenesis. Required for body wall muscle cell development. This is Peptidyl-prolyl cis-trans isomerase 4 (cyn-4) from Caenorhabditis elegans.